The following is a 492-amino-acid chain: Argininosuccinate lyase (492 aa).

Belongs to the lyase 1 family. Argininosuccinate lyase subfamily.

The protein resides in the cytoplasm. The enzyme catalyses 2-(N(omega)-L-arginino)succinate = fumarate + L-arginine. The protein operates within amino-acid biosynthesis; L-arginine biosynthesis; L-arginine from L-ornithine and carbamoyl phosphate: step 3/3. This chain is Argininosuccinate lyase, found in Methanocorpusculum labreanum (strain ATCC 43576 / DSM 4855 / Z).